The chain runs to 366 residues: Ribosomal RNA large subunit methyltransferase M (366 aa).

S-adenosyl-L-methionine contacts are provided by residues serine 188, 221 to 224 (CPGG), aspartate 240, aspartate 260, and aspartate 277. The active-site Proton acceptor is lysine 306.

It belongs to the class I-like SAM-binding methyltransferase superfamily. RNA methyltransferase RlmE family. RlmM subfamily. Monomer.

The protein resides in the cytoplasm. The enzyme catalyses cytidine(2498) in 23S rRNA + S-adenosyl-L-methionine = 2'-O-methylcytidine(2498) in 23S rRNA + S-adenosyl-L-homocysteine + H(+). Catalyzes the 2'-O-methylation at nucleotide C2498 in 23S rRNA. This is Ribosomal RNA large subunit methyltransferase M from Pectobacterium atrosepticum (strain SCRI 1043 / ATCC BAA-672) (Erwinia carotovora subsp. atroseptica).